A 774-amino-acid chain; its full sequence is Potassium/sodium hyperpolarization-activated cyclic nucleotide-gated channel 3 (774 aa).

The interval 1–48 (MEAEQRPAAGASEGATPGLEAVPPVAPPPATAASGPIPKSGPEPKRRH) is disordered. The Cytoplasmic segment spans residues 1 to 97 (MEAEQRPAAG…PYSDFRFYWD (97 aa)). The tract at residues 46-91 (RRHLGTLLQPTVNKFSLRVFGSHKAVEIEQERVKSAGAWIIHPYSD) is involved in subunit assembly. The chain crosses the membrane as a helical span at residues 98–118 (LIMLLLMVGNLIVLPVGITFF). Residues 119 to 124 (KEENSP) lie on the Extracellular side of the membrane. The helical transmembrane segment at 125–145 (PWIVFNVLSDTFFLLDLVLNF) threads the bilayer. Topologically, residues 146-171 (RTGIVVEEGAEILLAPRAIRTRYLRT) are cytoplasmic. A helical membrane pass occupies residues 172–192 (WFLVDLISSIPVDYIFLVVEL). Over 193–201 (EPRLDAEVY) the chain is Extracellular. The chain crosses the membrane as a helical; Voltage-sensor span at residues 202 to 222 (KTARALRIVRFTKILSLLRLL). Residues 223-253 (RLSRLIRYIHQWEEIFHMTYDLASAVVRIFN) are Cytoplasmic-facing. Residues 254-274 (LIGMMLLLCHWDGCLQFLVPM) form a helical membrane-spanning segment. Topologically, residues 275–297 (LQDFPPDCWVSINHMVNHSWGRQ) are extracellular. N-linked (GlcNAc...) asparagine glycosylation is present at Asn-291. An intramembrane region (pore-forming) is located at residues 298–319 (YSHALFKAMSHMLCIGYGQQAP). The Extracellular portion of the chain corresponds to 320 to 329 (VGMPDVWLTM). The chain crosses the membrane as a helical span at residues 330–350 (LSMIVGATCYAMFIGHATALI). The Cytoplasmic portion of the chain corresponds to 351–774 (QSLDSSRRQY…PRGLQLSANM (424 aa)). The segment at 354 to 774 (DSSRRQYQEK…PRGLQLSANM (421 aa)) is interaction with KCTD3. The 3',5'-cyclic AMP site is built by Gly-492, Glu-493, Cys-495, Arg-502, Thr-503, Arg-543, and Arg-546. At Ser-634 the chain carries Phosphoserine. The tract at residues 682–774 (SLSRAGRSQV…PRGLQLSANM (93 aa)) is disordered. Residues 751 to 763 (TAQPPRPPVPEPA) are compositionally biased toward pro residues.

It belongs to the potassium channel HCN family. In terms of assembly, homotetramer. The potassium channel is composed of a homo- or heterotetrameric complex of pore-forming subunits. Interacts with HCN11. Interacts with KCTD3; this interaction increases cell surface expression and current density of this channel. Interacts with PEX5L. As to expression, detected in brain.

It is found in the cell membrane. The enzyme catalyses K(+)(in) = K(+)(out). It catalyses the reaction Na(+)(in) = Na(+)(out). With respect to regulation, unlike HCN2 and HCN4, HCN3 is insensitive to cyclic nucleotides, such as cAMP or cGMP. This lack of sensitivity of HCN3, despite harboring a functional cyclic nucleotide-binding domain (CNBD), may be explained by its shorter C-terminal sequence, which may alter the normal autoinhibition of the channel. Inhibited by Cs(1+) and ZD7288. Phosphatidylinositol-4,5-bisphosphate (PIP(2)) shifts HCN3 activation to more depolarized potentials and accelerated activation kinetics. Functionally, hyperpolarization-activated ion channel that are permeable to sodium and potassium ions, with an about 3:1 preference for potassium ions. Contributes to the native pacemaker currents in heart (If) and in neurons (Ih). In particular, plays a pivotal role in maintaining excitability and promoting rhythmic burst firing within hypothalamic nuclei. Exerts a significant influence on the configuration of the cardiac action potential waveform. Does not appear to play a prominent role in the processing of acute, neuropathic, or inflammatory pain. This chain is Potassium/sodium hyperpolarization-activated cyclic nucleotide-gated channel 3 (HCN3), found in Homo sapiens (Human).